A 367-amino-acid polypeptide reads, in one-letter code: Probable ATP-dependent RNA helicase MJ0669 (367 aa).

The Q motif motif lies at 6–34 (MNFNELNLSDNILNAIRNKGFEKPTDIQM). The Helicase ATP-binding domain maps to 38–206 (PLFLNDEYNI…KKYMGDYSFI (169 aa)). An ATP-binding site is contributed by 51 to 58 (ARTGSGKT). The DEAD box signature appears at 154 to 157 (DEAD). One can recognise a Helicase C-terminal domain in the interval 213–367 (NIEQSYVEVN…KLKIKKLKFG (155 aa)).

Belongs to the DEAD box helicase family. In terms of assembly, homodimer.

It catalyses the reaction ATP + H2O = ADP + phosphate + H(+). This chain is Probable ATP-dependent RNA helicase MJ0669, found in Methanocaldococcus jannaschii (strain ATCC 43067 / DSM 2661 / JAL-1 / JCM 10045 / NBRC 100440) (Methanococcus jannaschii).